Reading from the N-terminus, the 1442-residue chain is Cleavage and polyadenylation specificity factor subunit 1 (1442 aa).

Belongs to the CPSF1 family. In terms of assembly, component of the CPSF complex, at least composed of CPSF160, CPSF100, CPSF73-I, CPSF73-II, CPSF30, FY and FIPS5. Forms a complex with cleavage and polyadenylation specificity factor (CPSF) subunits FY, CPSF30, CPSF73-I, CPSF 73-II and CPSF100.

It is found in the nucleus. Functionally, CPSF plays a key role in pre-mRNA 3'-end formation, recognizing the AAUAAA signal sequence and interacting with poly(A)polymerase and other factors to bring about cleavage and poly(A) addition. This subunit is involved in the RNA recognition step of the polyadenylation reaction. The polypeptide is Cleavage and polyadenylation specificity factor subunit 1 (CPSF160) (Arabidopsis thaliana (Mouse-ear cress)).